The chain runs to 265 residues: 3-methyl-2-oxobutanoate hydroxymethyltransferase (265 aa).

Mg(2+) contacts are provided by aspartate 41 and aspartate 80. Residues 41–42 (DS), aspartate 80, and lysine 110 contribute to the 3-methyl-2-oxobutanoate site. Glutamate 112 contacts Mg(2+). The Proton acceptor role is filled by glutamate 179.

This sequence belongs to the PanB family. As to quaternary structure, homodecamer; pentamer of dimers. Requires Mg(2+) as cofactor.

It localises to the cytoplasm. It carries out the reaction 3-methyl-2-oxobutanoate + (6R)-5,10-methylene-5,6,7,8-tetrahydrofolate + H2O = 2-dehydropantoate + (6S)-5,6,7,8-tetrahydrofolate. It participates in cofactor biosynthesis; (R)-pantothenate biosynthesis; (R)-pantoate from 3-methyl-2-oxobutanoate: step 1/2. Its function is as follows. Catalyzes the reversible reaction in which hydroxymethyl group from 5,10-methylenetetrahydrofolate is transferred onto alpha-ketoisovalerate to form ketopantoate. The chain is 3-methyl-2-oxobutanoate hydroxymethyltransferase from Pseudothermotoga lettingae (strain ATCC BAA-301 / DSM 14385 / NBRC 107922 / TMO) (Thermotoga lettingae).